Here is a 303-residue protein sequence, read N- to C-terminus: Y-box-binding protein 1 (303 aa).

Over residues methionine 1–proline 12 the composition is skewed to polar residues. A disordered region spans residues methionine 1 to glycine 28. The 65-residue stretch at glycine 39–valine 103 folds into the CSD domain. The interval tryptophan 43–asparagine 48 is C5-methylcytosine binding. The segment at alanine 98–glutamate 303 is disordered. Positions histidine 122–proline 132 are enriched in basic residues. Composition is skewed to low complexity over residues proline 133 to asparagine 143 and proline 173 to tyrosine 187. 2 stretches are compositionally biased toward basic residues: residues phenylalanine 220 to proline 229 and arginine 258 to arginine 270. Over residues proline 271 to alanine 284 the composition is skewed to basic and acidic residues.

The protein belongs to the YBX1 family.

Its subcellular location is the cytoplasm. It localises to the nucleus. It is found in the cytoplasmic granule. The protein resides in the secreted. The protein localises to the extracellular exosome. Its subcellular location is the P-body. DNA- and RNA-binding protein involved in various processes, such as translational repression, RNA stabilization, mRNA splicing and transcription regulation. Binds preferentially to the 5'-[CU]CUGCG-3' RNA motif and specifically recognizes mRNA transcripts modified by C5-methylcytosine (m5C). Promotes mRNA stabilization: acts by binding to m5C-containing mRNAs and preventing mRNA decay. Plays a role in the maternal-to-zygotic transition in early embryo by binding to m5C-containing maternal mRNAs and preventing their degradation. Also promotes maternal-to-zygotic transition in oocytes and embryos by promoting translation repression; molecular mechanisms governing translation repression are unknown. Plays a key role in RNA composition of extracellular exosomes by defining the sorting of small non-coding RNAs, such as tRNAs, Y RNAs, Vault RNAs and miRNAs. Probably sorts RNAs in exosomes by recognizing and binding C5-methylcytosine (m5C)-containing RNAs. Acts as a key effector of epidermal progenitors by preventing epidermal progenitor senescence: acts by regulating the translation of a senescence-associated subset of cytokine mRNAs, possibly by binding to m5C-containing mRNAs. Also involved in pre-mRNA alternative splicing regulation: binds to splice sites in pre-mRNA and regulates splice site selection. Also able to bind DNA and regulate transcription. Binds to promoters that contain a Y-box (5'-CTGATTGGCCAA-3'). Promotes separation of DNA strands that contain mismatches or are modified by cisplatin. Has endonucleolytic activity and can introduce nicks or breaks into double-stranded DNA, suggesting a role in DNA repair. The secreted form acts as an extracellular mitogen and stimulates cell migration and proliferation. In Xenopus laevis (African clawed frog), this protein is Y-box-binding protein 1.